The following is a 398-amino-acid chain: 1-deoxy-D-xylulose 5-phosphate reductoisomerase (398 aa).

The NADPH site is built by T10, G11, S12, I13, and N124. A 1-deoxy-D-xylulose 5-phosphate-binding site is contributed by K125. E126 contacts NADPH. Residue D150 participates in Mn(2+) binding. 1-deoxy-D-xylulose 5-phosphate contacts are provided by S151, E152, S186, and H209. E152 contacts Mn(2+). NADPH is bound at residue G215. 1-deoxy-D-xylulose 5-phosphate is bound by residues S222, N227, K228, and E231. E231 provides a ligand contact to Mn(2+).

This sequence belongs to the DXR family. Mg(2+) is required as a cofactor. Mn(2+) serves as cofactor.

The enzyme catalyses 2-C-methyl-D-erythritol 4-phosphate + NADP(+) = 1-deoxy-D-xylulose 5-phosphate + NADPH + H(+). It functions in the pathway isoprenoid biosynthesis; isopentenyl diphosphate biosynthesis via DXP pathway; isopentenyl diphosphate from 1-deoxy-D-xylulose 5-phosphate: step 1/6. Catalyzes the NADPH-dependent rearrangement and reduction of 1-deoxy-D-xylulose-5-phosphate (DXP) to 2-C-methyl-D-erythritol 4-phosphate (MEP). This Tolumonas auensis (strain DSM 9187 / NBRC 110442 / TA 4) protein is 1-deoxy-D-xylulose 5-phosphate reductoisomerase.